The sequence spans 228 residues: MIQRHKLIVLIFLLIFCLSGCNTSKRLPYSHKYSYKELSKDDPHNLTYKGHYKVGKNYKIKGKTYKPHSTKSFTETGYASWYGGRKDGFHGKKTANGDRFNRNLLTAAHKTLPLPCLVKVTNKANNKSVILMVNDRGPFKKNRIIDVSQKAAEILAFKNQGITKVKIEYLPNETEKFLKNINLKKPQSKTLAKNSKKSSSTKVTKNAKCSVNCHIKLVNLKYKLAVNP.

A signal peptide spans 1 to 23 (MIQRHKLIVLIFLLIFCLSGCNT).

This sequence belongs to the RlpA family.

Lytic transglycosylase with a strong preference for naked glycan strands that lack stem peptides. The sequence is that of Endolytic peptidoglycan transglycosylase RlpA from Rickettsia felis (strain ATCC VR-1525 / URRWXCal2) (Rickettsia azadi).